A 74-amino-acid chain; its full sequence is Small ribosomal subunit protein bS18 (74 aa).

The protein belongs to the bacterial ribosomal protein bS18 family. As to quaternary structure, part of the 30S ribosomal subunit. Forms a tight heterodimer with protein bS6.

Its function is as follows. Binds as a heterodimer with protein bS6 to the central domain of the 16S rRNA, where it helps stabilize the platform of the 30S subunit. This is Small ribosomal subunit protein bS18 from Alkalilimnicola ehrlichii (strain ATCC BAA-1101 / DSM 17681 / MLHE-1).